The sequence spans 672 residues: GPI mannosyltransferase pigv-1 (672 aa).

Residues 1-134 are Cytoplasmic-facing; the sequence is MRRREPGRDV…TQRCLGFCFR (134 aa). Residues 82–94 are compositionally biased toward basic and acidic residues; it reads REESDSSSSREDS. The interval 82–115 is disordered; it reads REESDSSSSREDSPLGSTETGESCSTTDDEESKE. The segment covering 97 to 107 has biased composition (low complexity); it reads GSTETGESCST. The helical transmembrane segment at 135–155 threads the bilayer; sequence QLFFSRMWVFILQFIASYYAG. The Extracellular segment spans residues 156-239; the sequence is DRFRTDGFNL…NGMESVFGWT (84 aa). A helical transmembrane segment spans residues 240–260; sequence FPPWVTITLAAVFVNLFCFLL. The Cytoplasmic portion of the chain corresponds to 261 to 277; sequence CGMTLYQVVLIMTRSVK. Helical transmembrane passes span 278 to 298 and 299 to 319; these read ISLL…FSSA and YSES…LFGL. Over 320 to 345 the chain is Extracellular; sequence RGKGFWHRMLKGFTGTICFGLTFAVR. Residues 346-366 traverse the membrane as a helical segment; it reads SNGLLNFLYVAWIWCGTLLWD. Residues 367–423 lie on the Cytoplasmic side of the membrane; the sequence is EEMPIPDCHKLISTLAATKNERYKQEWQAKFWRFQQKRKQNRKVFRWTDPNFSRCVT. The chain crosses the membrane as a helical span at residues 424–444; sequence LFIVIVCAISATLLFFTPYVF. Over 445–520 the chain is Extracellular; the sequence is MTNFTADEFC…WSVKFFGYWK (76 aa). The chain crosses the membrane as a helical span at residues 521 to 541; sequence IKKIPCFLMMLPAAILTVLAI. Topologically, residues 542–569 are cytoplasmic; sequence KSSWNDVFLNKRWNNIWVLTARSDHSLP. The helical transmembrane segment at 570 to 590 threads the bilayer; the sequence is MAIHSSVLLFVAIFYINSEVF. The Extracellular portion of the chain corresponds to 591–592; sequence TR. The chain crosses the membrane as a helical span at residues 593 to 613; that stretch reads IIFSSSPFIYIYIATYIDKLT. The Cytoplasmic segment spans residues 614–648; it reads QGTIAGNRLWQYFESPGILPFFVFRRVWQDGWRGK. The chain crosses the membrane as a helical span at residues 649 to 669; it reads LLYIYILGYFVFGTMAHSAWL. Residues 670-672 lie on the Extracellular side of the membrane; that stretch reads PFT.

This sequence belongs to the PIGV family. In terms of tissue distribution, expressed in epithelial tissues including the epidermis, pharynx, intestine, rectum and excretory cell during embryogenesis.

The protein localises to the endoplasmic reticulum membrane. Its pathway is glycolipid biosynthesis; glycosylphosphatidylinositol-anchor biosynthesis. In terms of biological role, alpha-1,6-mannosyltransferase involved in glycosylphosphatidylinositol-anchor biosynthesis. Transfers the second mannose to the glycosylphosphatidylinositol during GPI precursor assembly. Required for maintenance of epithelial integrity during embryogenesis. This Caenorhabditis elegans protein is GPI mannosyltransferase pigv-1.